The primary structure comprises 826 residues: Outer membrane usher protein YehB (826 aa).

Residues 1 to 22 (MLRMTPLASAIVALLLGIEAYA) form the signal peptide. Cys-809 and Cys-825 are joined by a disulfide.

This sequence belongs to the fimbrial export usher family.

The protein resides in the cell outer membrane. Its function is as follows. Part of the yehABCD fimbrial operon. Could contribute to adhesion to various surfaces in specific environmental niches. Probably involved in the export and assembly of fimbrial subunits across the outer membrane. The protein is Outer membrane usher protein YehB (yehB) of Escherichia coli (strain K12).